The chain runs to 492 residues: Protein nucleotidyltransferase YdiU (492 aa).

Residues Gly-90, Gly-92, Arg-93, Lys-113, Asp-125, Gly-126, Arg-176, and Arg-183 each coordinate ATP. Asp-252 acts as the Proton acceptor in catalysis. Residues Asn-253 and Asp-262 each coordinate Mg(2+). Asp-262 is an ATP binding site.

Belongs to the SELO family. Mg(2+) serves as cofactor. The cofactor is Mn(2+).

The enzyme catalyses L-seryl-[protein] + ATP = 3-O-(5'-adenylyl)-L-seryl-[protein] + diphosphate. The catalysed reaction is L-threonyl-[protein] + ATP = 3-O-(5'-adenylyl)-L-threonyl-[protein] + diphosphate. It carries out the reaction L-tyrosyl-[protein] + ATP = O-(5'-adenylyl)-L-tyrosyl-[protein] + diphosphate. It catalyses the reaction L-histidyl-[protein] + UTP = N(tele)-(5'-uridylyl)-L-histidyl-[protein] + diphosphate. The enzyme catalyses L-seryl-[protein] + UTP = O-(5'-uridylyl)-L-seryl-[protein] + diphosphate. The catalysed reaction is L-tyrosyl-[protein] + UTP = O-(5'-uridylyl)-L-tyrosyl-[protein] + diphosphate. Nucleotidyltransferase involved in the post-translational modification of proteins. It can catalyze the addition of adenosine monophosphate (AMP) or uridine monophosphate (UMP) to a protein, resulting in modifications known as AMPylation and UMPylation. In Thioalkalivibrio sulfidiphilus (strain HL-EbGR7), this protein is Protein nucleotidyltransferase YdiU.